A 370-amino-acid chain; its full sequence is DNA replication and repair protein RecF (370 aa).

33 to 40 (GPNAAGKT) lines the ATP pocket.

This sequence belongs to the RecF family.

The protein localises to the cytoplasm. Its function is as follows. The RecF protein is involved in DNA metabolism; it is required for DNA replication and normal SOS inducibility. RecF binds preferentially to single-stranded, linear DNA. It also seems to bind ATP. The protein is DNA replication and repair protein RecF of Moorella thermoacetica (strain ATCC 39073 / JCM 9320).